The sequence spans 138 residues: Cystatin-11 (138 aa).

A signal peptide spans 1–26 (MMAEPWQALQLLLAILLTLMALPYQA). Disulfide bonds link Cys94-Cys102 and Cys115-Cys135. Asn132 carries an N-linked (GlcNAc...) asparagine glycan.

This sequence belongs to the cystatin family. In terms of tissue distribution, detected in the epithelium and lumen of the epididymis, and in sperm (at protein level).

It is found in the secreted. Has antibacterial activity against the Gram-negative bacteria E.coli. May play a role in sperm maturation and fertilization. The chain is Cystatin-11 (CST11) from Homo sapiens (Human).